The sequence spans 131 residues: Small ribosomal subunit protein uS8 (131 aa).

This sequence belongs to the universal ribosomal protein uS8 family. In terms of assembly, part of the 30S ribosomal subunit. Contacts proteins S5 and S12.

Functionally, one of the primary rRNA binding proteins, it binds directly to 16S rRNA central domain where it helps coordinate assembly of the platform of the 30S subunit. This chain is Small ribosomal subunit protein uS8, found in Legionella pneumophila subsp. pneumophila (strain Philadelphia 1 / ATCC 33152 / DSM 7513).